A 1896-amino-acid polypeptide reads, in one-letter code: Plexin-A1 (1896 aa).

An N-terminal signal peptide occupies residues 1–26; sequence MPLPPRSLQVLLLLLLLLLLLPGMWA. Residues 27 to 512 form the Sema domain; that stretch reads EAGLPRAGGG…TEKQVTRVPV (486 aa). Residues 27–1244 are Extracellular-facing; sequence EAGLPRAGGG…VYSDSLLTLP (1218 aa). N-linked (GlcNAc...) asparagine glycosylation is present at Asn-77. 10 cysteine pairs are disulfide-bonded: Cys-95–Cys-104, Cys-130–Cys-138, Cys-286–Cys-407, Cys-302–Cys-358, Cys-376–Cys-395, Cys-515–Cys-532, Cys-521–Cys-563, Cys-524–Cys-541, Cys-535–Cys-547, and Cys-598–Cys-617. Residues Asn-660, Asn-672, and Asn-701 are each glycosylated (N-linked (GlcNAc...) asparagine). 4 IPT/TIG domains span residues 864 to 959, 961 to 1045, 1048 to 1147, and 1150 to 1236; these read PKIL…FTFV, PTFY…YNYT, PTIL…FLYY, and PVLE…LQVY. Residue Asn-1043 is glycosylated (N-linked (GlcNAc...) asparagine). N-linked (GlcNAc...) asparagine glycosylation is found at Asn-1187 and Asn-1212. A helical transmembrane segment spans residues 1245-1265; the sequence is AIVGIGGGGGLLLLVIVAVLI. Residues 1264 to 1317 adopt a coiled-coil conformation; sequence LIAYKRKSRDADRTLKRLQLQMDNLESRVALECKEAFAELQTDIHELTNDLDGA. Residues 1266–1896 are Cytoplasmic-facing; the sequence is AYKRKSRDAD…QVVDTMALSS (631 aa).

This sequence belongs to the plexin family. As to quaternary structure, interacts directly with NRP1 and NRP2. Interacts with PLXN1B. Interacts with FARP2, RND1 and KDR/VEGFR2. Binding of SEMA3A leads to dissociation of FARP2. Interacts with CRMP1, DPYSL2/CRMP2, DPYSL3/CRMP3 and DPYSL4/CRMP4. Interacts (via TIG domains) with TREM2; the interaction mediates SEMA6D binding and signaling through TYROBP. Detected in fetal brain, lung, liver and kidney.

Its subcellular location is the cell membrane. Its function is as follows. Coreceptor for SEMA3A, SEMA3C, SEMA3F and SEMA6D. Necessary for signaling by class 3 semaphorins and subsequent remodeling of the cytoskeleton. Plays a role in axon guidance, invasive growth and cell migration. Class 3 semaphorins bind to a complex composed of a neuropilin and a plexin. The plexin modulates the affinity of the complex for specific semaphorins, and its cytoplasmic domain is required for the activation of down-stream signaling events in the cytoplasm. Acts as coreceptor of TREM2 for SEMA6D in dendritic cells and is involved in the generation of immune responses and skeletal homeostasis. In Homo sapiens (Human), this protein is Plexin-A1.